The following is a 347-amino-acid chain: Palmitoyltransferase ZDHHC11 (347 aa).

The Cytoplasmic segment spans residues 1-46; the sequence is MKEMNICGINKNWVLPEAQENNVKKFLPRPLSRVNGWSPPLHSFQA. Residues 47–67 form a helical membrane-spanning segment; the sequence is ISWITYLAMSIVTFGIFIPFL. Over 68–75 the chain is Lumenal; it reads PYSWKYAA. Residues 76 to 96 form a helical membrane-spanning segment; that stretch reads NIVMGGVFIFHLIVHLIAITI. Topologically, residues 97–170 are cytoplasmic; sequence DPADTNVRLK…LNNCVGRRNY (74 aa). Residues 128-178 form the DHHC domain; sequence QYCHLCEVTASKKAKHCSACNKCVSGFDHHCKWLNNCVGRRNYWFFFWSVA. The active-site S-palmitoyl cysteine intermediate is the cysteine 158. The chain crosses the membrane as a helical span at residues 171–191; that stretch reads WFFFWSVASAAVGILGVMIIL. Topologically, residues 192 to 234 are lumenal; sequence CYICIQYFVNPDELRTDPLYKEIISENTWLLFLSLWPVPVKTP. Residues 235 to 255 form a helical membrane-spanning segment; that stretch reads IVLSIAVMALLLAIASFVMLG. The Cytoplasmic portion of the chain corresponds to 256 to 347; that stretch reads HLLIFHLYLI…SPPKICHSED (92 aa). The span at 291–306 shows a compositional bias: basic and acidic residues; it reads ELPLQKKGDLPQEKSD. Positions 291-332 are disordered; that stretch reads ELPLQKKGDLPQEKSDNWAWPKSPPRVGSQKFPVSTLSPKSS. A compositionally biased stretch (polar residues) spans 322-331; it reads FPVSTLSPKS.

Belongs to the DHHC palmitoyltransferase family. Interacts with IRF3 and STING1; in presence of DNA viruses recruits IRF3 to STING1 promoting IRF3 phosphorylation and activation.

It localises to the endosome membrane. It carries out the reaction L-cysteinyl-[protein] + hexadecanoyl-CoA = S-hexadecanoyl-L-cysteinyl-[protein] + CoA. Functionally, endoplasmic reticulum-localized palmitoyltransferase that could catalyze the addition of palmitate onto various protein substrates and be involved in a variety of cellular processes. Has a palmitoyltransferase activity toward NCDN and regulates NCDN association with endosome membranes through this palmitoylation. May play a role in cell proliferation. Its function is as follows. Also has a palmitoyltransferase activity-independent function in DNA virus-triggered and CGAS-mediated innate immune response. Functions as an adapter that recruits IRF3 to STING1 to promote the activation of that key transcriptional regulator of type I interferon (IFN)-dependent immune response. This chain is Palmitoyltransferase ZDHHC11, found in Mus musculus (Mouse).